Here is a 322-residue protein sequence, read N- to C-terminus: Protease HtpX homolog (322 aa).

2 helical membrane-spanning segments follow: residues 19 to 39 and 61 to 81; these read ILLI…CYLL and FINL…IAYF. His-165 serves as a coordination point for Zn(2+). Residue Glu-166 is part of the active site. His-169 serves as a coordination point for Zn(2+). Transmembrane regions (helical) follow at residues 175 to 195 and 216 to 236; these read VRLL…AQIA and ILIL…ATLM. Glu-245 is a Zn(2+) binding site.

The protein belongs to the peptidase M48B family. Requires Zn(2+) as cofactor.

It is found in the cell inner membrane. The sequence is that of Protease HtpX homolog from Bacteroides fragilis (strain YCH46).